A 263-amino-acid polypeptide reads, in one-letter code: MLRFAVLGHPVAHSLSPAMHAFALESLGLEGSYEAWDTPLEALPGRLKEVRRAFRGVNLTLPLKEAALAHLDWVSPEAQRIGAVNTVLQVEGRLFGFNTDAPGFLEALKAGGIPLKGPALVLGAGGAGRAVAFALREAGLEVWVWNRTPQRALALAEEFGLRAVPLEKAREARLLVNATRVGLEDPSASPLPAELFPEEGAAVDLVYRPLWTRFLREAKAKGLKVQTGLPMLAWQGALAFRLWTGLLPDPSGMEEAARRALGV.

Residues 14-16 (SLS) and Thr60 contribute to the shikimate site. The active-site Proton acceptor is the Lys64. Shikimate is bound by residues Asn85 and Asp100. NADP(+) contacts are provided by residues 123 to 127 (GAGGA), 146 to 151 (NRTPQR), and Leu205. Position 207 (Tyr207) interacts with shikimate. Residue Gly228 coordinates NADP(+). Gln235 provides a ligand contact to shikimate.

The protein belongs to the shikimate dehydrogenase family. In terms of assembly, homodimer.

The enzyme catalyses shikimate + NADP(+) = 3-dehydroshikimate + NADPH + H(+). Its pathway is metabolic intermediate biosynthesis; chorismate biosynthesis; chorismate from D-erythrose 4-phosphate and phosphoenolpyruvate: step 4/7. Involved in the biosynthesis of the chorismate, which leads to the biosynthesis of aromatic amino acids. Catalyzes the reversible NADPH linked reduction of 3-dehydroshikimate (DHSA) to yield shikimate (SA). This Thermus thermophilus (strain ATCC 27634 / DSM 579 / HB8) protein is Shikimate dehydrogenase (NADP(+)).